Consider the following 370-residue polypeptide: MARGPGDTDMDEASADAAIPSSTPNPTVAFRCTHALSGHTKAVAAVKFSPDGSLLASGSADRTVALWDAATGARVNTLAGHSCGVSDVAWNPNGRYLATAADDHSLKLWDAETGACLRTLTGHTNYVFCCNFDGAAGHLLASGSFDETLRLWDVRSGRCLREVPAHSDPVTSAAFSYDGSMVVTSSLDGLIRLWDTQTGHCLKTLFDRDSPPVSFAAFTPNAKYVLCNTLDGRAKLWDYAAGRTRRTYAGGHVNTQFCISSGFLGGSSSASFDLGCSMVVTGSEDGSLAAYDISTGHVVGRGAAAAAAAEGGGDEGSAAAAAAGGVAGGHTAAVLSVNVHPSAPLVATGGHHPDNSVRVWAASRTEPAAA.

Residues 1–22 form a disordered region; sequence MARGPGDTDMDEASADAAIPSS. WD repeat units follow at residues 38-77, 80-119, 122-162, 165-204, 208-247, 262-301, and 329-370; these read GHTK…RVNT, GHSC…CLRT, GHTN…CLRE, AHSD…CLKT, RDSP…TRRT, GFLG…VVGR, and GHTA…PAAA.

It belongs to the WD repeat WDR5/wds family.

It is found in the nucleus. Functionally, part of a complex involved in 'Lys-4' histone H3 methylation. The protein is Protein Mut11 (Mut11) of Chlamydomonas reinhardtii (Chlamydomonas smithii).